The following is a 477-amino-acid chain: Aspartyl/glutamyl-tRNA(Asn/Gln) amidotransferase subunit B (477 aa).

It belongs to the GatB/GatE family. GatB subfamily. As to quaternary structure, heterotrimer of A, B and C subunits.

It carries out the reaction L-glutamyl-tRNA(Gln) + L-glutamine + ATP + H2O = L-glutaminyl-tRNA(Gln) + L-glutamate + ADP + phosphate + H(+). It catalyses the reaction L-aspartyl-tRNA(Asn) + L-glutamine + ATP + H2O = L-asparaginyl-tRNA(Asn) + L-glutamate + ADP + phosphate + 2 H(+). In terms of biological role, allows the formation of correctly charged Asn-tRNA(Asn) or Gln-tRNA(Gln) through the transamidation of misacylated Asp-tRNA(Asn) or Glu-tRNA(Gln) in organisms which lack either or both of asparaginyl-tRNA or glutaminyl-tRNA synthetases. The reaction takes place in the presence of glutamine and ATP through an activated phospho-Asp-tRNA(Asn) or phospho-Glu-tRNA(Gln). This Coxiella burnetii (strain RSA 493 / Nine Mile phase I) protein is Aspartyl/glutamyl-tRNA(Asn/Gln) amidotransferase subunit B.